Reading from the N-terminus, the 94-residue chain is Phosphoribosyl-ATP pyrophosphatase (94 aa).

This sequence belongs to the PRA-PH family.

It localises to the cytoplasm. The enzyme catalyses 1-(5-phospho-beta-D-ribosyl)-ATP + H2O = 1-(5-phospho-beta-D-ribosyl)-5'-AMP + diphosphate + H(+). It functions in the pathway amino-acid biosynthesis; L-histidine biosynthesis; L-histidine from 5-phospho-alpha-D-ribose 1-diphosphate: step 2/9. The sequence is that of Phosphoribosyl-ATP pyrophosphatase (hisE) from Pyrobaculum aerophilum (strain ATCC 51768 / DSM 7523 / JCM 9630 / CIP 104966 / NBRC 100827 / IM2).